The following is a 454-amino-acid chain: MSDNDTIVAQATPPGRGGVGILRISGLKAREVAETVLGKLPKPRYADYLPFKDADGSVLDQGIALWFPGPNSFTGEDVLELQGHGGPVILDLLLKRILTIPGLRIARPGEFSERAFLNDKLDLAQAEAIADLIDASSEQAARSALNSLQGAFSARVNHLVEALTHLRIYVEAAIDFPDEEIDFLSDGKIEAQLNNVIADLDAVRAEARQGSLLREGMKVVIAGRPNAGKSSLLNALAGREAAIVTDIAGTTRDVLREHIHIDGMPLHIIDTAGLREASDEVERIGIERAWQEIEQADRVLFMVDGTTTDAVDPAEIWPEFIARLPAKLPITVVRNKADITGETLGMSEVNGHALIRLSARTGEGVDVLRNHLKQSMGFDTNMEGGFLARRRHLQALEQAAEHLQQGKAQLLGAWAGELLAEELRLAQQNLSEITGEFTSDDLLGRIFSSFCIGK.

Positions 23, 80, and 120 each coordinate (6S)-5-formyl-5,6,7,8-tetrahydrofolate. Positions 216-377 constitute a TrmE-type G domain; that stretch reads GMKVVIAGRP…LRNHLKQSMG (162 aa). Asn226 contacts K(+). Residues 226–231, 245–251, 270–273, 335–338, and 358–360 contribute to the GTP site; these read NAGKSS, TDIAGTT, DTAG, NKAD, and SAR. A Mg(2+)-binding site is contributed by Ser230. K(+) is bound by residues Thr245, Ile247, and Thr250. Thr251 is a binding site for Mg(2+). Lys454 contacts (6S)-5-formyl-5,6,7,8-tetrahydrofolate.

This sequence belongs to the TRAFAC class TrmE-Era-EngA-EngB-Septin-like GTPase superfamily. TrmE GTPase family. In terms of assembly, homodimer. Heterotetramer of two MnmE and two MnmG subunits. K(+) serves as cofactor.

The protein resides in the cytoplasm. Functionally, exhibits a very high intrinsic GTPase hydrolysis rate. Involved in the addition of a carboxymethylaminomethyl (cmnm) group at the wobble position (U34) of certain tRNAs, forming tRNA-cmnm(5)s(2)U34. This is tRNA modification GTPase MnmE from Escherichia coli O6:K15:H31 (strain 536 / UPEC).